The following is a 239-amino-acid chain: Ribosomal RNA large subunit methyltransferase E (239 aa).

A disordered region spans residues 1-20 (MTKAPIAGNRTGRKLGQRVK). Positions 11–20 (TGRKLGQRVK) are enriched in basic residues. Glycine 81, tryptophan 83, aspartate 104, aspartate 120, and aspartate 144 together coordinate S-adenosyl-L-methionine. Lysine 184 acts as the Proton acceptor in catalysis.

The protein belongs to the class I-like SAM-binding methyltransferase superfamily. RNA methyltransferase RlmE family.

The protein resides in the cytoplasm. It carries out the reaction uridine(2552) in 23S rRNA + S-adenosyl-L-methionine = 2'-O-methyluridine(2552) in 23S rRNA + S-adenosyl-L-homocysteine + H(+). Its function is as follows. Specifically methylates the uridine in position 2552 of 23S rRNA at the 2'-O position of the ribose in the fully assembled 50S ribosomal subunit. The sequence is that of Ribosomal RNA large subunit methyltransferase E from Rhizobium etli (strain ATCC 51251 / DSM 11541 / JCM 21823 / NBRC 15573 / CFN 42).